The following is a 375-amino-acid chain: Alcohol dehydrogenase 1C (375 aa).

Position 2 is an N-acetylserine (Ser2). Ser23 is modified (phosphoserine). The Zn(2+) site is built by Cys47, His68, Cys98, Cys101, Cys104, Cys112, and Cys175. Residues 200–205, Asp224, Lys229, Ile270, 293–295, 318–320, and Arg370 contribute to the NAD(+) site; these read GLGGVG, VGV, and AIF.

The protein belongs to the zinc-containing alcohol dehydrogenase family. In terms of assembly, dimer of identical or non-identical chains of class I alcohol dehydrogenase: ADH1A, ADH1B, and ADH1C. Zn(2+) serves as cofactor. As to expression, expressed in kidney.

The protein localises to the cytoplasm. The enzyme catalyses a primary alcohol + NAD(+) = an aldehyde + NADH + H(+). It catalyses the reaction ethanol + NAD(+) = acetaldehyde + NADH + H(+). In terms of biological role, alcohol dehydrogenase. Exhibits high activity for ethanol oxidation and plays a major role in ethanol catabolism. The polypeptide is Alcohol dehydrogenase 1C (ADH1C) (Papio hamadryas (Hamadryas baboon)).